Here is a 226-residue protein sequence, read N- to C-terminus: Thioredoxin domain-containing protein 9 (226 aa).

A Thioredoxin domain is found at 75–180; that stretch reads EIGSERDFFQ…TTETLEWRLG (106 aa). 3 positions are modified to phosphoserine: S188, S221, and S223.

As to quaternary structure, forms ternary complexes with the chaperonin TCP1 complex, spanning the cylindrical chaperonin cavity and contacting at least 2 subunits.

It is found in the cytoplasm. The protein localises to the nucleus. It localises to the cytoskeleton. Its subcellular location is the microtubule organizing center. The protein resides in the centrosome. It is found in the midbody. Functionally, significantly diminishes the chaperonin TCP1 complex ATPase activity, thus negatively impacts protein folding, including that of actin or tubulin. This chain is Thioredoxin domain-containing protein 9 (Txndc9), found in Rattus norvegicus (Rat).